We begin with the raw amino-acid sequence, 669 residues long: Protein ENTREP3 (669 aa).

The next 3 membrane-spanning stretches (helical) occupy residues 34–54 (LLTL…FSMV), 67–87 (SCPS…IVSW), and 91–111 (FTLV…LSMA). Residue N160 is glycosylated (N-linked (GlcNAc...) asparagine). A helical membrane pass occupies residues 174-194 (LFSVCGLTICAAIICTLSAIV). 2 positions are modified to phosphoserine: S359 and S390. Disordered regions lie at residues 387–420 (FEDS…PTAA), 445–502 (PRGG…TTSS), and 550–571 (RSAE…SGPT). The span at 399–408 (AARSYSCSAP) shows a compositional bias: low complexity. S494 carries the phosphoserine modification. Position 575 is a phosphoserine (S575). Residues 597 to 624 (RRSPDPTGTGAHGYKQVRRSPWGRPGRE) are disordered.

This sequence belongs to the ENTREP family. In terms of assembly, may interact with WWOX.

It localises to the membrane. The chain is Protein ENTREP3 from Mus musculus (Mouse).